The chain runs to 742 residues: Ion-translocating oxidoreductase complex subunit C (742 aa).

2 4Fe-4S ferredoxin-type domains span residues 369–397 (GEPQ…QQLY) and 407–436 (KATT…VQYF). 8 residues coordinate [4Fe-4S] cluster: C377, C380, C383, C387, C416, C419, C422, and C426. Residues 602–719 (KLEQQQANAE…PEEQVDPRKA (118 aa)) form a disordered region.

This sequence belongs to the 4Fe4S bacterial-type ferredoxin family. RnfC subfamily. The complex is composed of six subunits: RsxA, RsxB, RsxC, RsxD, RsxE and RsxG. The cofactor is [4Fe-4S] cluster.

The protein resides in the cell inner membrane. Part of a membrane-bound complex that couples electron transfer with translocation of ions across the membrane. Required to maintain the reduced state of SoxR. The polypeptide is Ion-translocating oxidoreductase complex subunit C (Escherichia coli O6:H1 (strain CFT073 / ATCC 700928 / UPEC)).